A 757-amino-acid chain; its full sequence is MKKSIIAFPRIGSNRELKFALEKYFRKEISEAELQIVAKELRLESWKSQKEAGIDYPISNDFSFYDQTLDLSIALGVIPERYKKLKLNELDTLFALARGFQDEENDVKARPMKKWFNTNYHYIVPEISKETVIKANFSKLLNEYQEAKTAGFETRPTIIGPYTFLILADYLSGVTEDAILSDLIGAYTVLFDQLNNLGGEWLQIEEPALVLDQTEEEQQLFIKIYQELLKNKNKLKVLLQTYFGDLRDSYQEIIKLDFDGIGLDFVEGRESVKLVQKYGFPQDKLLFAGVVNGKNIWRNHYQKTLSLLKDLGNIDNIVINTSCSLQHVPVTTENEIKLSKEILNHFAFAKEKLVEVSEISEIYVKKNTSLLDKNIALFDKNRVQENIQLKQKITHLTDKDFIRTPSLVERRADQIKALRLPLLPTTTIGSFPQTPEVRKARLQYKRGELSKSDYEAFLEEKIKECLELQENIGLDVLVHGEFERNDMVEYFGEQLDGYIFTQKAWVQSYGTRCVKPPIVWGDITRPQAMTVRWSAYAQSQTSKPVKGMLTGPVTILNWSFPREDISLKESTLQLALAVQEEVLDLEKAGIKIIQIDEAALREKLPLRRSDWYSEYLDWSIPAFRLVHSKVKAETQIHTHMCYSEFEDIIPSIDAMDADVISFEASRSQLSIIDALKAHHFQTLVGPGVYDIHSPRIPSSQEIKIQLEKILNKLPIEQVWVNPDCGLKTRGNKETIPSLTHLVEATKEVRKEKITYDK.

5-methyltetrahydropteroyltri-L-glutamate-binding positions include 15–18 and lysine 114; that span reads RELK. L-homocysteine contacts are provided by residues 428-430 and glutamate 481; that span reads IGS. L-methionine-binding positions include 428-430 and glutamate 481; that span reads IGS. Residues 512–513 and tryptophan 558 contribute to the 5-methyltetrahydropteroyltri-L-glutamate site; that span reads RC. Aspartate 596 contributes to the L-homocysteine binding site. Aspartate 596 is a binding site for L-methionine. Glutamate 602 contacts 5-methyltetrahydropteroyltri-L-glutamate. Residues histidine 639, cysteine 641, and glutamate 663 each contribute to the Zn(2+) site. Histidine 692 serves as the catalytic Proton donor. Residue cysteine 724 participates in Zn(2+) binding.

It belongs to the vitamin-B12 independent methionine synthase family. Zn(2+) serves as cofactor.

The catalysed reaction is 5-methyltetrahydropteroyltri-L-glutamate + L-homocysteine = tetrahydropteroyltri-L-glutamate + L-methionine. It participates in amino-acid biosynthesis; L-methionine biosynthesis via de novo pathway; L-methionine from L-homocysteine (MetE route): step 1/1. In terms of biological role, catalyzes the transfer of a methyl group from 5-methyltetrahydrofolate to homocysteine resulting in methionine formation. This chain is 5-methyltetrahydropteroyltriglutamate--homocysteine methyltransferase, found in Lactococcus lactis subsp. cremoris (strain SK11).